We begin with the raw amino-acid sequence, 428 residues long: Serine--tRNA ligase (428 aa).

L-serine is bound at residue 234–236 (TAE). 265-267 (RRE) is an ATP binding site. Residue Glu-288 participates in L-serine binding. Residue 352-355 (EISS) coordinates ATP. An L-serine-binding site is contributed by Ser-388.

The protein belongs to the class-II aminoacyl-tRNA synthetase family. Type-1 seryl-tRNA synthetase subfamily. As to quaternary structure, homodimer. The tRNA molecule binds across the dimer.

It localises to the cytoplasm. The enzyme catalyses tRNA(Ser) + L-serine + ATP = L-seryl-tRNA(Ser) + AMP + diphosphate + H(+). It catalyses the reaction tRNA(Sec) + L-serine + ATP = L-seryl-tRNA(Sec) + AMP + diphosphate + H(+). Its pathway is aminoacyl-tRNA biosynthesis; selenocysteinyl-tRNA(Sec) biosynthesis; L-seryl-tRNA(Sec) from L-serine and tRNA(Sec): step 1/1. Its function is as follows. Catalyzes the attachment of serine to tRNA(Ser). Is also able to aminoacylate tRNA(Sec) with serine, to form the misacylated tRNA L-seryl-tRNA(Sec), which will be further converted into selenocysteinyl-tRNA(Sec). The polypeptide is Serine--tRNA ligase (Synechococcus elongatus (strain ATCC 33912 / PCC 7942 / FACHB-805) (Anacystis nidulans R2)).